A 228-amino-acid chain; its full sequence is UPF0173 metal-dependent hydrolase PTH_1415 (228 aa).

The protein belongs to the UPF0173 family.

This chain is UPF0173 metal-dependent hydrolase PTH_1415, found in Pelotomaculum thermopropionicum (strain DSM 13744 / JCM 10971 / SI).